The primary structure comprises 171 residues: Protein-export protein SecB (171 aa).

Belongs to the SecB family. As to quaternary structure, homotetramer, a dimer of dimers. One homotetramer interacts with 1 SecA dimer.

The protein localises to the cytoplasm. One of the proteins required for the normal export of preproteins out of the cell cytoplasm. It is a molecular chaperone that binds to a subset of precursor proteins, maintaining them in a translocation-competent state. It also specifically binds to its receptor SecA. This chain is Protein-export protein SecB, found in Granulibacter bethesdensis (strain ATCC BAA-1260 / CGDNIH1).